The sequence spans 479 residues: RAC-gamma serine/threonine-protein kinase (479 aa).

Serine 2 carries the post-translational modification N-acetylserine. One can recognise a PH domain in the interval 5 to 107 (TIVKEGWVQK…WTEAIQAVAD (103 aa)). A disulfide bond links cysteine 59 and cysteine 76. In terms of domain architecture, Protein kinase spans 148–405 (FDYLKLLGKG…AKEIMRHSFF (258 aa)). Residues 154-162 (LGKGTFGKV) and lysine 177 each bind ATP. Aspartate 271 functions as the Proton acceptor in the catalytic mechanism. The cysteines at positions 293 and 307 are disulfide-linked. Threonine 302 carries an O-linked (GlcNAc) threonine glycan. Position 305 is a phosphothreonine; by PDPK1 (threonine 305). Residue threonine 309 is glycosylated (O-linked (GlcNAc) threonine). An AGC-kinase C-terminal domain is found at 406–479 (SGVNWQDVYD…QFSYSASGRE (74 aa)). Residues 445–479 (TITPPEKYDDDGMDGMDNERRPHFPQFSYSASGRE) are disordered. Phosphothreonine is present on threonine 447. Serine 472 carries the post-translational modification Phosphoserine; by PKC/PRKCZ. Serine 472 carries O-linked (GlcNAc) serine; alternate glycosylation.

It belongs to the protein kinase superfamily. AGC Ser/Thr protein kinase family. RAC subfamily. In terms of assembly, interacts (via PH domain) with TCL1A; this enhances AKT3 phosphorylation and activation. Interacts with TRAF6. Interacts with KCTD20. Interacts with BTBD10. Phosphorylation on Thr-305 and Ser-472 is required for full activity. Phosphorylation of the activation loop at Thr-305 by PDPK1/PDK1 is a prerequisite for full activation. Phosphorylation at Ser-472 by mTORC2 in response to growth factors plays a key role in AKT1 activation by facilitating subsequent phosphorylation of the activation loop by PDPK1/PDK1. Post-translationally, ubiquitinated. When fully phosphorylated and translocated into the nucleus, undergoes 'Lys-48'-polyubiquitination catalyzed by TTC3, leading to its degradation by the proteasome. In terms of processing, O-GlcNAcylation at Thr-302 and Thr-309 inhibits activating phosphorylation at Thr-305 via disrupting the interaction between AKT and PDPK1/PDK1. Isoform 1 is expressed in prostate, testis, uterus and mammary gland and isoform 2 is expressed in prostate, testis and mammary gland.

It localises to the nucleus. Its subcellular location is the cytoplasm. The protein resides in the membrane. It carries out the reaction L-seryl-[protein] + ATP = O-phospho-L-seryl-[protein] + ADP + H(+). The enzyme catalyses L-threonyl-[protein] + ATP = O-phospho-L-threonyl-[protein] + ADP + H(+). With respect to regulation, two specific sites, one in the kinase domain (Thr-305) and the other in the C-terminal regulatory region (Ser-472), need to be phosphorylated for its full activation. IGF-1 leads to the activation of AKT3, which may play a role in regulating cell survival. AKT3 is one of 3 closely related serine/threonine-protein kinases (AKT1, AKT2 and AKT3) called the AKT kinase, and which regulate many processes including metabolism, proliferation, cell survival, growth and angiogenesis. This is mediated through serine and/or threonine phosphorylation of a range of downstream substrates. Over 100 substrate candidates have been reported so far, but for most of them, no isoform specificity has been reported. AKT3 is the least studied AKT isoform. It plays an important role in brain development and is crucial for the viability of malignant glioma cells. AKT3 isoform may also be the key molecule in up-regulation and down-regulation of MMP13 via IL13. Required for the coordination of mitochondrial biogenesis with growth factor-induced increases in cellular energy demands. Down-regulation by RNA interference reduces the expression of the phosphorylated form of BAD, resulting in the induction of caspase-dependent apoptosis. This is RAC-gamma serine/threonine-protein kinase (Akt3) from Mus musculus (Mouse).